Consider the following 177-residue polypeptide: Probable inosine/xanthosine triphosphatase (177 aa).

The protein belongs to the YjjX NTPase family. As to quaternary structure, homodimer. The cofactor is Mg(2+). Mn(2+) serves as cofactor.

The enzyme catalyses XTP + H2O = XDP + phosphate + H(+). It catalyses the reaction ITP + H2O = IDP + phosphate + H(+). Functionally, phosphatase that hydrolyzes non-canonical purine nucleotides such as XTP and ITP to their respective diphosphate derivatives. Probably excludes non-canonical purines from DNA/RNA precursor pool, thus preventing their incorporation into DNA/RNA and avoiding chromosomal lesions. This Pyrobaculum arsenaticum (strain DSM 13514 / JCM 11321 / PZ6) protein is Probable inosine/xanthosine triphosphatase.